Here is a 140-residue protein sequence, read N- to C-terminus: Natriuretic peptides B (140 aa).

The first 26 residues, 1-26, serve as a signal peptide directing secretion; that stretch reads MEPCAALPRALLLLLFLHLSPLGGRP. The interval 71-94 is disordered; that stretch reads LEPLHRSHSPAEAPEAGGTPRGVL. A disulfide bridge links C118 with C134.

This sequence belongs to the natriuretic peptide family. Post-translationally, the precursor molecule is proteolytically cleaved by the endoproteases FURIN or CORIN at Arg-108 to produce the brain natriuretic peptide 32. CORIN also cleaves the precursor molecule at additional residues including Arg-105, Arg-108 and possibly Lys-111. Undergoes further proteolytic cleavage by various proteases such as DPP4, MME and possibly FAP, to give rise to a variety of shorter peptides. Cleaved at Pro-110 by the prolyl endopeptidase FAP (seprase) activity (in vitro). Degraded by IDE. During IDE degradation, the resulting products initially increase the activation of NPR1 and can also stimulate NPR2 to produce cGMP before the fragments are completely degraded and inactivated by IDE (in vitro). As to expression, brain and also in atria, but at much lower levels than ANP.

It localises to the secreted. In terms of biological role, cardiac hormone that plays a key role in mediating cardio-renal homeostasis. May also function as a paracrine antifibrotic factor in the heart. Acts by specifically binding and stimulating NPR1 to produce cGMP, which in turn activates effector proteins that drive various biological responses. Involved in regulating the extracellular fluid volume and maintaining the fluid-electrolyte balance through natriuresis, diuresis, vasorelaxation, and inhibition of renin and aldosterone secretion. Binds the clearance receptor NPR3. Functionally, may affect cardio-renal homeostasis. Able to promote the production of cGMP although its potency is very low compared to brain natriuretic peptide 32. The sequence is that of Natriuretic peptides B (NPPB) from Canis lupus familiaris (Dog).